Here is a 657-residue protein sequence, read N- to C-terminus: Glycogen debranching enzyme (657 aa).

Asp-336 (nucleophile) is an active-site residue. The active-site Proton donor is the Glu-371. The disordered stretch occupies residues 460-479; the sequence is ANGEENRDGTNNNYSNNHGK.

Belongs to the glycosyl hydrolase 13 family.

The catalysed reaction is Hydrolysis of (1-&gt;6)-alpha-D-glucosidic linkages to branches with degrees of polymerization of three or four glucose residues in limit dextrin.. It functions in the pathway glycan degradation; glycogen degradation. Removes maltotriose and maltotetraose chains that are attached by 1,6-alpha-linkage to the limit dextrin main chain, generating a debranched limit dextrin. The protein is Glycogen debranching enzyme of Escherichia coli O81 (strain ED1a).